The sequence spans 169 residues: Pyrophosphate-energized proton pump 1 (169 aa).

The next 3 helical transmembrane spans lie at 45–65, 114–134, and 141–161; these read YVVA…GIAM, VIPS…VLLI, and AFAA…LVAI.

The protein belongs to the H(+)-translocating pyrophosphatase (TC 3.A.10) family. Homodimer. It depends on Mg(2+) as a cofactor.

Its subcellular location is the cell inner membrane. It catalyses the reaction diphosphate + H2O + H(+)(in) = 2 phosphate + 2 H(+)(out). Proton pump that utilizes the energy of pyrophosphate hydrolysis as the driving force for proton movement across the membrane. Generates a proton motive force. The sequence is that of Pyrophosphate-energized proton pump 1 (hppA1) from Rhizobium leguminosarum bv. trifolii.